The chain runs to 299 residues: Probable phosphate butyryltransferase (299 aa).

The protein belongs to the phosphate acetyltransferase and butyryltransferase family.

It carries out the reaction butanoyl-CoA + phosphate = butanoyl phosphate + CoA. In terms of biological role, catalyzes the conversion of butyryl-CoA through butyryl phosphate to butyrate. The protein is Probable phosphate butyryltransferase (yqiS) of Bacillus subtilis (strain 168).